The following is a 275-amino-acid chain: Formamidopyrimidine-DNA glycosylase (275 aa).

Pro2 acts as the Schiff-base intermediate with DNA in catalysis. Glu3 (proton donor) is an active-site residue. Lys59 (proton donor; for beta-elimination activity) is an active-site residue. Positions 92, 111, and 155 each coordinate DNA. The segment at 240–274 (NVYGRAGKACPKCGTTIEKQVLGQRSSYYCPQCQR) adopts an FPG-type zinc-finger fold. Arg264 serves as the catalytic Proton donor; for delta-elimination activity.

Belongs to the FPG family. Monomer. Zn(2+) is required as a cofactor.

It catalyses the reaction Hydrolysis of DNA containing ring-opened 7-methylguanine residues, releasing 2,6-diamino-4-hydroxy-5-(N-methyl)formamidopyrimidine.. The enzyme catalyses 2'-deoxyribonucleotide-(2'-deoxyribose 5'-phosphate)-2'-deoxyribonucleotide-DNA = a 3'-end 2'-deoxyribonucleotide-(2,3-dehydro-2,3-deoxyribose 5'-phosphate)-DNA + a 5'-end 5'-phospho-2'-deoxyribonucleoside-DNA + H(+). In terms of biological role, involved in base excision repair of DNA damaged by oxidation or by mutagenic agents. Acts as a DNA glycosylase that recognizes and removes damaged bases. Has a preference for oxidized purines, such as 7,8-dihydro-8-oxoguanine (8-oxoG). Has AP (apurinic/apyrimidinic) lyase activity and introduces nicks in the DNA strand. Cleaves the DNA backbone by beta-delta elimination to generate a single-strand break at the site of the removed base with both 3'- and 5'-phosphates. This is Formamidopyrimidine-DNA glycosylase from Magnetococcus marinus (strain ATCC BAA-1437 / JCM 17883 / MC-1).